We begin with the raw amino-acid sequence, 57 residues long: Sec-independent protein translocase protein TatAy (57 aa).

A helical transmembrane segment spans residues 1–21; sequence MPIGPGSLAVIAIVALIIFGP.

It belongs to the TatA/E family. Forms a complex with TatCy. Two types of complexes exist: one composed of TatAy and TatCy, and another composed only of TatAy. Cytosolic TatA forms large complexes or aggregates.

It is found in the cell membrane. Its subcellular location is the cytoplasm. The protein localises to the cytosol. Its function is as follows. Part of the twin-arginine translocation (Tat) system that transports large folded proteins containing a characteristic twin-arginine motif in their signal peptide across membranes. TatA could form the protein-conducting channel of the Tat system. Required for YwbN secretion. The protein is Sec-independent protein translocase protein TatAy of Bacillus subtilis (strain 168).